The chain runs to 110 residues: Iron-sulfur cluster insertion protein ErpA (110 aa).

Positions 38, 102, and 104 each coordinate iron-sulfur cluster.

This sequence belongs to the HesB/IscA family. Homodimer. It depends on iron-sulfur cluster as a cofactor.

In terms of biological role, required for insertion of 4Fe-4S clusters for at least IspG. The polypeptide is Iron-sulfur cluster insertion protein ErpA (Marinobacter nauticus (strain ATCC 700491 / DSM 11845 / VT8) (Marinobacter aquaeolei)).